We begin with the raw amino-acid sequence, 214 residues long: Cytochrome b (214 aa).

The next 4 membrane-spanning stretches (helical) occupy residues 31–51 (FGSM…FLAI), 75–96 (WIMQ…YTHI), 111–131 (WLSG…GYVL), and 176–196 (FFAL…IHII). 2 residues coordinate heme b: His-81 and His-95. 2 residues coordinate heme b: His-180 and His-194. Residue His-199 coordinates a ubiquinone.

Belongs to the cytochrome b family. The cytochrome bc1 complex contains 3 respiratory subunits (MT-CYB, CYC1 and UQCRFS1), 2 core proteins (UQCRC1 and UQCRC2) and probably 6 low-molecular weight proteins. It depends on heme b as a cofactor.

It is found in the mitochondrion inner membrane. Component of the ubiquinol-cytochrome c reductase complex (complex III or cytochrome b-c1 complex) that is part of the mitochondrial respiratory chain. The b-c1 complex mediates electron transfer from ubiquinol to cytochrome c. Contributes to the generation of a proton gradient across the mitochondrial membrane that is then used for ATP synthesis. This Cerastes cerastes (Horned desert viper) protein is Cytochrome b (MT-CYB).